The sequence spans 505 residues: NADH-quinone oxidoreductase subunit N (505 aa).

14 helical membrane-spanning segments follow: residues 20–40 (ALAPELVLLVTAVCLMLGDLF), 59–79 (ALALTLSMNFSGGATAFGGVF), 83–103 (GLAAAFKVVCLAALGLTALMS), 115–135 (GEYYSLMAFSTLGMCVMVSAG), 137–157 (AIVLYLGLELMALPIYALVAL), 172–192 (FLMGSFASALLLFGLSILYGL), 220–240 (AVVALGLVLAGLGFKVATVPF), 251–271 (APTTVTAFMSVAAKTASFAVL), 285–305 (LWSDALAGLAVLTMLLGNIAA), 314–334 (MLAYSAIAHAGYALLGLAACT), 342–362 (AAYLTIYLCMNIGAFAVIIYL), 394–414 (LAAVMLVFLFSLTGIPPTAGF), 431–451 (ITVVVAVVCSTISAWYYLGVA), and 481–501 (AVCLAGAVLWGIFPQSLLFWI).

This sequence belongs to the complex I subunit 2 family. In terms of assembly, NDH-1 is composed of 14 different subunits. Subunits NuoA, H, J, K, L, M, N constitute the membrane sector of the complex.

Its subcellular location is the cell inner membrane. It catalyses the reaction a quinone + NADH + 5 H(+)(in) = a quinol + NAD(+) + 4 H(+)(out). In terms of biological role, NDH-1 shuttles electrons from NADH, via FMN and iron-sulfur (Fe-S) centers, to quinones in the respiratory chain. The immediate electron acceptor for the enzyme in this species is believed to be ubiquinone. Couples the redox reaction to proton translocation (for every two electrons transferred, four hydrogen ions are translocated across the cytoplasmic membrane), and thus conserves the redox energy in a proton gradient. In Desulfovibrio desulfuricans (strain ATCC 27774 / DSM 6949 / MB), this protein is NADH-quinone oxidoreductase subunit N.